Reading from the N-terminus, the 53-residue chain is IgA-inducing protein homolog (53 aa).

The first 30 residues, 1-30 (MCSYYHMKKRSVSGCNITIFAVMFSHLSAG), serve as a signal peptide directing secretion.

Its subcellular location is the secreted. Functionally, enhances IgA secretion from B-cells stimulated via CD40. The sequence is that of IgA-inducing protein homolog (IGIP) from Homo sapiens (Human).